We begin with the raw amino-acid sequence, 409 residues long: uncharacterized protein (409 aa).

The HTH arsR-type domain occupies 305–409 (LTKIDEKVVK…LIGEDDELEM (105 aa)).

This is an uncharacterized protein from Methanocaldococcus jannaschii (strain ATCC 43067 / DSM 2661 / JAL-1 / JCM 10045 / NBRC 100440) (Methanococcus jannaschii).